A 51-amino-acid chain; its full sequence is MSSHKTFKIKQFLAKKQKQNRPIPQWIRMKTGNKIRYNSKRRHWKRTKLGL.

Belongs to the eukaryotic ribosomal protein eL39 family.

The polypeptide is Putative ribosomal protein eL39-like 5 (RPL39P5) (Homo sapiens (Human)).